The primary structure comprises 252 residues: Probable transcriptional regulatory protein DSY2470 (252 aa).

It belongs to the TACO1 family.

It is found in the cytoplasm. This is Probable transcriptional regulatory protein DSY2470 from Desulfitobacterium hafniense (strain Y51).